The following is a 290-amino-acid chain: O-methyltransferase agiB (290 aa).

Residue Asp155 participates in S-adenosyl-L-methionine binding. His194 functions as the Proton acceptor in the catalytic mechanism.

This sequence belongs to the class I-like SAM-binding methyltransferase superfamily. Cation-independent O-methyltransferase family.

It functions in the pathway secondary metabolite biosynthesis. Functionally, O-methyltransferase; part of the gene cluster that mediates the biosynthesis of the aspergillicins A and F, 2 cryptic cyclic hexa-depsipeptides. The hexamodular NRPS agiA catalyzes the condensation of the six amino acid residues including N-Me-L-O-Me-tyrosine, L-proline 1, L-proline 2, D-isoleucine, O-acetyl-threonine, and L-isoleucine. The starting condensation domain (C1) of agiA probably loads acetyl-CoA which is condensed on the N-terminus of threonine by the first module to yield O-acetyl-threonine. The second module then loads L-isoleucine. The epimerase (E) domain on module 2 is probably involved in the formation of the D-isoleucine moiety. Modules 3 and 4 further load 2 successive L-prolines. Module 5 is then involved in the condensation of O-Me-L-tyrosine produced by the O-methyltransferase agiB and the N-methyl transferase (NMeT) domain on module 5 probably catalyzes the N-methylation to yield the N-Me-L-O-Me-tyrosine moiety. The A domain of module 5 loads preferentially O-Me-L-tyrosine, but it can also accept L-phenylalanine, which leads to the production of aspergillicin G. Module 6 then loads the last residue, L-isoleucine. The C-terminal thiolesterase (TE) domain probably cyclizes the peptide using the hydroxy group from threonine to form the cyclic depsipeptide. This Aspergillus flavus (strain ATCC 200026 / FGSC A1120 / IAM 13836 / NRRL 3357 / JCM 12722 / SRRC 167) protein is O-methyltransferase agiB.